The chain runs to 135 residues: Dihydromethanopterin reductase (135 aa).

Residues A9, 16–21, 52–54, and 93–97 each bind NADP(+); these read LGLNGH, PKT, and GGIAV.

In terms of assembly, homodimer.

The enzyme catalyses 5,6,7,8-tetrahydromethanopterin + NAD(+) = 7,8-dihydromethanopterin + NADH + H(+). It catalyses the reaction 5,6,7,8-tetrahydromethanopterin + NADP(+) = 7,8-dihydromethanopterin + NADPH + H(+). It participates in cofactor biosynthesis; 5,6,7,8-tetrahydromethanopterin biosynthesis. Its function is as follows. Catalyzes the reduction of dihydromethanopterin (H(2)MPT) to tetrahydromethanopterin (H(4)MPT). Shows preference for NADPH rather than NADH as electron donor. Does not reduce dihydrofolate. The sequence is that of Dihydromethanopterin reductase (dmrA) from Methylorubrum extorquens (strain ATCC 14718 / DSM 1338 / JCM 2805 / NCIMB 9133 / AM1) (Methylobacterium extorquens).